Reading from the N-terminus, the 299-residue chain is ATP phosphoribosyltransferase (299 aa).

It belongs to the ATP phosphoribosyltransferase family. Long subfamily. Mg(2+) serves as cofactor.

The protein localises to the cytoplasm. The enzyme catalyses 1-(5-phospho-beta-D-ribosyl)-ATP + diphosphate = 5-phospho-alpha-D-ribose 1-diphosphate + ATP. The protein operates within amino-acid biosynthesis; L-histidine biosynthesis; L-histidine from 5-phospho-alpha-D-ribose 1-diphosphate: step 1/9. With respect to regulation, feedback inhibited by histidine. In terms of biological role, catalyzes the condensation of ATP and 5-phosphoribose 1-diphosphate to form N'-(5'-phosphoribosyl)-ATP (PR-ATP). Has a crucial role in the pathway because the rate of histidine biosynthesis seems to be controlled primarily by regulation of HisG enzymatic activity. This Baumannia cicadellinicola subsp. Homalodisca coagulata protein is ATP phosphoribosyltransferase.